The chain runs to 252 residues: Imidazole glycerol phosphate synthase subunit HisF (252 aa).

Catalysis depends on residues Asp-11 and Asp-130.

Belongs to the HisA/HisF family. As to quaternary structure, heterodimer of HisH and HisF.

It localises to the cytoplasm. The catalysed reaction is 5-[(5-phospho-1-deoxy-D-ribulos-1-ylimino)methylamino]-1-(5-phospho-beta-D-ribosyl)imidazole-4-carboxamide + L-glutamine = D-erythro-1-(imidazol-4-yl)glycerol 3-phosphate + 5-amino-1-(5-phospho-beta-D-ribosyl)imidazole-4-carboxamide + L-glutamate + H(+). It functions in the pathway amino-acid biosynthesis; L-histidine biosynthesis; L-histidine from 5-phospho-alpha-D-ribose 1-diphosphate: step 5/9. Functionally, IGPS catalyzes the conversion of PRFAR and glutamine to IGP, AICAR and glutamate. The HisF subunit catalyzes the cyclization activity that produces IGP and AICAR from PRFAR using the ammonia provided by the HisH subunit. The sequence is that of Imidazole glycerol phosphate synthase subunit HisF from Desulforamulus reducens (strain ATCC BAA-1160 / DSM 100696 / MI-1) (Desulfotomaculum reducens).